A 447-amino-acid chain; its full sequence is UDP-N-acetylmuramoylalanine--D-glutamate ligase (447 aa).

Residue 112–118 (GTNGKST) participates in ATP binding.

Belongs to the MurCDEF family.

Its subcellular location is the cytoplasm. It carries out the reaction UDP-N-acetyl-alpha-D-muramoyl-L-alanine + D-glutamate + ATP = UDP-N-acetyl-alpha-D-muramoyl-L-alanyl-D-glutamate + ADP + phosphate + H(+). Its pathway is cell wall biogenesis; peptidoglycan biosynthesis. Functionally, cell wall formation. Catalyzes the addition of glutamate to the nucleotide precursor UDP-N-acetylmuramoyl-L-alanine (UMA). The chain is UDP-N-acetylmuramoylalanine--D-glutamate ligase from Legionella pneumophila subsp. pneumophila (strain Philadelphia 1 / ATCC 33152 / DSM 7513).